A 975-amino-acid chain; its full sequence is Ubiquitin C-terminal hydrolase 15 (975 aa).

Residues Cys-88, Cys-91, Cys-99, Cys-102, Cys-108, Cys-112, His-121, and Cys-125 each coordinate Zn(2+). Residues 88–125 (CATCHGPAKTRCSRCKSVRYCSGKCQIIHWRQGHKQTC) form an MYND-type zinc finger. The tract at residues 301–378 (EGPYASAAES…STKTAVSTNS (78 aa)) is disordered. The span at 309 to 322 (ESLQRSNSSGNVTG) shows a compositional bias: polar residues. Residues 354–369 (YDGHEKNPHNKNEQRS) are compositionally biased toward basic and acidic residues. The USP domain maps to 441–747 (RGLFNCGNSC…GAYMLFYMRS (307 aa)). The active-site Nucleophile is the Cys-450. Catalysis depends on His-706, which acts as the Proton acceptor. The disordered stretch occupies residues 764-783 (PTCSKRHSSKSSKGSKQDLN).

It belongs to the peptidase C19 family. Highly expressed in young panicles. Expressed in roots, leaf blades, leaf sheaths and stems. Expressed at low levels in brown grains.

It is found in the cytoplasm. It localises to the nucleus. The catalysed reaction is Thiol-dependent hydrolysis of ester, thioester, amide, peptide and isopeptide bonds formed by the C-terminal Gly of ubiquitin (a 76-residue protein attached to proteins as an intracellular targeting signal).. In terms of biological role, recognizes and hydrolyzes the peptide bond at the C-terminal Gly of ubiquitin. Involved in the processing of poly-ubiquitin precursors as well as that of ubiquitinated proteins. Involved in the regulation of grain size. Acts as positive regulator of grain width and size by influencing cell proliferation. Functions partially antagonistically with GW2 in the regulation of grain width. Possesses deubiquitinating enzyme activity in vitro. The polypeptide is Ubiquitin C-terminal hydrolase 15 (Oryza sativa subsp. japonica (Rice)).